Here is a 904-residue protein sequence, read N- to C-terminus: Alanine--tRNA ligase (904 aa).

The Zn(2+) site is built by His-584, His-588, Cys-687, and His-691.

The protein belongs to the class-II aminoacyl-tRNA synthetase family. Zn(2+) is required as a cofactor.

The protein localises to the cytoplasm. The catalysed reaction is tRNA(Ala) + L-alanine + ATP = L-alanyl-tRNA(Ala) + AMP + diphosphate. Functionally, catalyzes the attachment of alanine to tRNA(Ala) in a two-step reaction: alanine is first activated by ATP to form Ala-AMP and then transferred to the acceptor end of tRNA(Ala). Also edits incorrectly charged Ser-tRNA(Ala) and Gly-tRNA(Ala) via its editing domain. This Mycobacterium tuberculosis (strain ATCC 25177 / H37Ra) protein is Alanine--tRNA ligase.